Here is a 237-residue protein sequence, read N- to C-terminus: Ribonuclease PH (237 aa).

Residues arginine 86 and glycine 124–arginine 126 contribute to the phosphate site.

The protein belongs to the RNase PH family. As to quaternary structure, homohexameric ring arranged as a trimer of dimers.

It carries out the reaction tRNA(n+1) + phosphate = tRNA(n) + a ribonucleoside 5'-diphosphate. Its function is as follows. Phosphorolytic 3'-5' exoribonuclease that plays an important role in tRNA 3'-end maturation. Removes nucleotide residues following the 3'-CCA terminus of tRNAs; can also add nucleotides to the ends of RNA molecules by using nucleoside diphosphates as substrates, but this may not be physiologically important. Probably plays a role in initiation of 16S rRNA degradation (leading to ribosome degradation) during starvation. This Tolumonas auensis (strain DSM 9187 / NBRC 110442 / TA 4) protein is Ribonuclease PH.